We begin with the raw amino-acid sequence, 347 residues long: Homocysteine S-methyltransferase 3 (347 aa).

Residues 12–333 (LMTDFLEKCG…NTIRAIAKVL (322 aa)) form the Hcy-binding domain. Zn(2+) contacts are provided by C251, C318, and C319.

As to quaternary structure, monomer. Requires Zn(2+) as cofactor. In terms of tissue distribution, expressed predominantly in rosette leaves. Expressed in roots, cauline leaves and developing seeds.

The catalysed reaction is S-methyl-L-methionine + L-homocysteine = 2 L-methionine + H(+). In terms of biological role, catalyzes methyl transfer from S-methylmethionine (SMM) to adenosyl-L-homocysteine (AdoMet). SMM degradation (by HMT-1, HMT-2 and HMT-3) and biosynthesis (by MMT1) constitute the SMM cycle in plants, which is probably required to achieve short term control of AdoMet level. This is Homocysteine S-methyltransferase 3 (HMT3) from Arabidopsis thaliana (Mouse-ear cress).